Here is a 526-residue protein sequence, read N- to C-terminus: Reelin domain-containing protein 1 (526 aa).

A signal peptide spans 1–23 (MRMQAALVGWACTTLCLASCSSA). Residues 24-179 (FSHGASTVAC…SAHSDDRMEP (156 aa)) form the Reelin domain. Topologically, residues 24–443 (FSHGASTVAC…PLGIQLRTPQ (420 aa)) are extracellular. Disordered stretches follow at residues 242-272 (DAET…PTLE), 294-336 (FASS…TVTQ), and 370-398 (LQTS…LPQS). Over residues 245-271 (TLSQPSSHTATEGSINQQPSGDSNPTL) the composition is skewed to polar residues. A compositionally biased stretch (polar residues) spans 385 to 396 (SEASRASASFLP). A helical membrane pass occupies residues 444–462 (LGILLCLSATLGMALAAGL). Residues 463-526 (RYLHTQYCHQ…PSVGSKKTVL (64 aa)) lie on the Cytoplasmic side of the membrane.

It is found in the membrane. This Homo sapiens (Human) protein is Reelin domain-containing protein 1.